A 253-amino-acid polypeptide reads, in one-letter code: Putative cysteine-rich repeat secretory protein 33 (253 aa).

The N-terminal stretch at 1-28 is a signal peptide; sequence MFSSYSLCKCLVSFHILAIQVLISCASS. Gnk2-homologous domains follow at residues 34 to 133 and 141 to 250; these read EYLN…MIND and YDNI…LYPF.

Belongs to the cysteine-rich repeat secretory protein family.

It localises to the secreted. The chain is Putative cysteine-rich repeat secretory protein 33 (CRRSP33) from Arabidopsis thaliana (Mouse-ear cress).